The chain runs to 347 residues: NADH-ubiquinone oxidoreductase chain 2 (347 aa).

Helical transmembrane passes span 1-21, 25-45, 55-75, 96-116, 123-143, 145-165, 178-198, 200-220, 237-257, 274-294, and 324-344; these read MNPLAQPIIYSTIFAGTLITA, HWFLTWVGLEMNMLAFIPVLT, AAIKYFLVQATASMILMMAIL, TMMLMALAMKLGMAPFHFWVP, TLMSGLLLLTWQKLAPISIMY, IFPVVNVNILLAFSILSIMVG, ILAYSSITHVGWMMAVLPYNP, ITIFNLIIYIVLTTTAFLALN, LTWLLPLIPSTLLSLGGLPPL, GTLIIPTAMAIITLINLYFYM, and FLLPTLMTLTTLLLPIAPLTF.

The protein belongs to the complex I subunit 2 family. As to quaternary structure, core subunit of respiratory chain NADH dehydrogenase (Complex I) which is composed of 45 different subunits. Interacts with TMEM242.

The protein localises to the mitochondrion inner membrane. It catalyses the reaction a ubiquinone + NADH + 5 H(+)(in) = a ubiquinol + NAD(+) + 4 H(+)(out). Its function is as follows. Core subunit of the mitochondrial membrane respiratory chain NADH dehydrogenase (Complex I) which catalyzes electron transfer from NADH through the respiratory chain, using ubiquinone as an electron acceptor. Essential for the catalytic activity and assembly of complex I. The polypeptide is NADH-ubiquinone oxidoreductase chain 2 (Hylobates lar (Lar gibbon)).